A 111-amino-acid chain; its full sequence is MTTIFERIIEGAVECDKVFEDENFIVIKDKFPQAPVHLLIIPKKHIEKLQDIQGDDFLLLAEAGKIIQLMARNFGIENGYRVVVNNGLEGGQSVFHLHIHLLGGGLLGSIA.

Residues 4-111 (IFERIIEGAV…LGGGLLGSIA (108 aa)) form the HIT domain. A Histidine triad motif motif is present at residues 96-100 (HLHIH).

This is an uncharacterized protein from Chlamydia trachomatis serovar D (strain ATCC VR-885 / DSM 19411 / UW-3/Cx).